We begin with the raw amino-acid sequence, 661 residues long: UvrABC system protein B (661 aa).

The 158-residue stretch at 25–182 (KGLNNKKRSQ…NDLVNLQYER (158 aa)) folds into the Helicase ATP-binding domain. 38-45 (GITGSGKT) serves as a coordination point for ATP. The Beta-hairpin signature appears at 91–114 (YYDYYQPEAYIPKTDVFIEKDSSI). The region spanning 430-592 (QVEDLVGEIQ…IIPKTINRTI (163 aa)) is the Helicase C-terminal domain. The UVR domain occupies 621–656 (KAHIDKLRKEMLKAASNLEFEQAAKLRDQLKTLEEA).

Belongs to the UvrB family. Forms a heterotetramer with UvrA during the search for lesions. Interacts with UvrC in an incision complex.

The protein resides in the cytoplasm. Functionally, the UvrABC repair system catalyzes the recognition and processing of DNA lesions. A damage recognition complex composed of 2 UvrA and 2 UvrB subunits scans DNA for abnormalities. Upon binding of the UvrA(2)B(2) complex to a putative damaged site, the DNA wraps around one UvrB monomer. DNA wrap is dependent on ATP binding by UvrB and probably causes local melting of the DNA helix, facilitating insertion of UvrB beta-hairpin between the DNA strands. Then UvrB probes one DNA strand for the presence of a lesion. If a lesion is found the UvrA subunits dissociate and the UvrB-DNA preincision complex is formed. This complex is subsequently bound by UvrC and the second UvrB is released. If no lesion is found, the DNA wraps around the other UvrB subunit that will check the other stand for damage. This Rickettsia bellii (strain RML369-C) protein is UvrABC system protein B.